The chain runs to 295 residues: 33 kDa chaperonin (295 aa).

2 disulfide bridges follow: C238–C240 and C271–C274.

The protein belongs to the HSP33 family. Under oxidizing conditions two disulfide bonds are formed involving the reactive cysteines. Under reducing conditions zinc is bound to the reactive cysteines and the protein is inactive.

Its subcellular location is the cytoplasm. Functionally, redox regulated molecular chaperone. Protects both thermally unfolding and oxidatively damaged proteins from irreversible aggregation. Plays an important role in the bacterial defense system toward oxidative stress. This Clostridium botulinum (strain Eklund 17B / Type B) protein is 33 kDa chaperonin.